The sequence spans 375 residues: Ribosomal RNA large subunit methyltransferase G (375 aa).

Belongs to the methyltransferase superfamily. RlmG family.

It is found in the cytoplasm. The catalysed reaction is guanosine(1835) in 23S rRNA + S-adenosyl-L-methionine = N(2)-methylguanosine(1835) in 23S rRNA + S-adenosyl-L-homocysteine + H(+). Functionally, specifically methylates the guanine in position 1835 (m2G1835) of 23S rRNA. This is Ribosomal RNA large subunit methyltransferase G from Erwinia tasmaniensis (strain DSM 17950 / CFBP 7177 / CIP 109463 / NCPPB 4357 / Et1/99).